We begin with the raw amino-acid sequence, 816 residues long: Two pore channel protein 1 (816 aa).

The Cytoplasmic portion of the chain corresponds to 1-112; the sequence is MAVSLDDDVP…AHNHLFYLME (112 aa). The disordered stretch occupies residues 17 to 64; sequence EGGSAPLAPSNGLGQEELPSKNGGSYAIHDSQAPSLSSGGESSPSSPA. Residues 50–63 are compositionally biased toward low complexity; it reads PSLSSGGESSPSSP. The helical transmembrane segment at 113–133 threads the bilayer; sequence LATALLLLLLSLCEAPAVPAL. R134 is a topological domain (extracellular). Residues 135-155 traverse the membrane as a helical segment; the sequence is LGIYVHATLELFALMVVVFEL. Residues 156 to 177 are Cytoplasmic-facing; sequence CMKLRWLGLHTFIRHKRTMVKT. The chain crosses the membrane as a helical span at residues 178–198; it reads SVLVVQFVEAIVVLVRQMSHV. Over 199–200 the chain is Extracellular; sequence RV. A helical transmembrane segment spans residues 201 to 220; sequence TRALRCIFLVDCRYCGGVRR. Over 221–234 the chain is Cytoplasmic; the sequence is NLRQIFQSLPPFMD. Residues 235-255 form a helical membrane-spanning segment; sequence ILLLLLFFMIIFAILGFYLFS. The Extracellular portion of the chain corresponds to 256–262; sequence PNPSDPY. An intramembrane region (helical; Pore-forming) is located at residues 263–286; the sequence is FSTLENSIVSLFVLLTTANFPDVM. At 287–294 the chain is on the extracellular side; the sequence is MPSYSRNP. The chain crosses the membrane as a helical span at residues 295-315; the sequence is WSCVFFIVYLSIELYFIMNLL. Residues 316-444 lie on the Cytoplasmic side of the membrane; the sequence is LAVVFDTFND…NILVKSKAFQ (129 aa). The helical transmembrane segment at 445–465 threads the bilayer; the sequence is YFMYLVVAVNGVWILVETFML. Residues 466–479 lie on the Extracellular side of the membrane; that stretch reads KGGNFFSKHVPWSY. Residues 480–500 form a helical membrane-spanning segment; it reads LVFLTIYGVELFLKVAGLGPV. The Cytoplasmic segment spans residues 501 to 503; it reads EYL. A helical membrane pass occupies residues 504 to 526; it reads SSGWNLFDFSVTVFAFLGLLALA. Residues 527–534 lie on the Extracellular side of the membrane; it reads LNMEPFYF. A helical transmembrane segment spans residues 535–549; sequence IVVLRPLQLLRLFKL. At 550 to 573 the chain is on the cytoplasmic side; sequence KERYRNVLDTMFELLPRMASLGLT. A helical membrane pass occupies residues 574-594; that stretch reads LLIFYYSFAIVGMEFFCGIVF. Residues 595–629 lie on the Extracellular side of the membrane; it reads PNCCNTSTVADAYRWRNHTVGNRTVVEEGYYYLNN. 3 N-linked (GlcNAc...) asparagine glycosylation sites follow: N599, N611, and N616. The segment at residues 630-653 is an intramembrane region (helical; Pore-forming); the sequence is FDNILNSFVTLFELTVVNNWYIIM. Over 654–670 the chain is Extracellular; the sequence is EGVTSQTSHWSRLYFMT. A helical membrane pass occupies residues 671 to 691; that stretch reads FYIVTMVVMTIIVAFILEAFV. Residues 692–816 are Cytoplasmic-facing; the sequence is FRMNYSRKNQ…GSRQRSQTVT (125 aa). A coiled-coil region spans residues 769-796; the sequence is SLKMYQEEIQEWYEEHAREQEQQRQLSS. Residues 782–816 are disordered; that stretch reads EEHAREQEQQRQLSSSAAPAAQQPPGSRQRSQTVT. The segment covering 791–816 has biased composition (low complexity); the sequence is QRQLSSSAAPAAQQPPGSRQRSQTVT.

It belongs to the calcium channel alpha-1 subunit (TC 1.A.1.11) family. Two pore calcium channel subfamily. As to quaternary structure, dimer. Interacts with MTOR; the interaction is required for TPCN1 ATP sensitivity. Interacts with STX7, STX8 and STX12. Interacts with JPT2. Found in a complex with LSM12, TPCN1 and TPCN2. In terms of processing, N-glycosylated. As to expression, highest expression found in the heart and kidney, and lowest expression found in the spleen.

It localises to the lysosome membrane. The protein localises to the endosome membrane. It is found in the early endosome membrane. The protein resides in the recycling endosome membrane. It catalyses the reaction Na(+)(in) = Na(+)(out). The enzyme catalyses Ca(2+)(in) = Ca(2+)(out). Na(+) current is inhibited by ATP in a MTORC-dependent manner. ATP sensitivity is independent of PI(3,5)P2. Probably regulated by Mg(2+) ions, cytosolic Mg(2+) selectively inhibits outward current while lysosomal Mg(2+) modestly inhibits both the outward and inward currents. In the absence of Mg(2+), NAADP readily activates TPCN2, with properties similar to PI(3,5)P2. Both current elicited by PI(3,5)P2 as well as NAADP are inhibited by tetrandrine. Intracellular channel initially characterized as a non-selective Ca(2+)-permeable channel activated by NAADP (nicotinic acid adenine dinucleotide phosphate), it is also a voltage-gated highly-selective Na(+) channel activated directly by PI(3,5)P2 (phosphatidylinositol 3,5-bisphosphate) that senses pH changes and confers electrical excitability to organelles. Localizes to the early and recycling endosomes membranes where it plays a role in the uptake and processing of proteins and regulates organellar membrane excitability, membrane trafficking and pH homeostasis. Ion selectivity is not fixed but rather agonist-dependent and under defined ionic conditions, can be readily activated by both NAADP and PI(3,5)P2. Required for mTOR-dependent nutrient sensing. In terms of biological role, (Microbial infection) During Ebola virus (EBOV) infection, controls the movement of endosomes containing virus particles and is required by EBOV to escape from the endosomal network into the cell cytoplasm. The sequence is that of Two pore channel protein 1 from Homo sapiens (Human).